The chain runs to 429 residues: Adenylosuccinate synthetase (429 aa).

Residues 12–18 (GDEGKGK) and 40–42 (GHT) each bind GTP. Asp-13 (proton acceptor) is an active-site residue. The Mg(2+) site is built by Asp-13 and Gly-40. IMP is bound by residues 13–16 (DEGK), 38–41 (NAGH), Thr-129, Arg-143, Gln-223, Thr-238, and Arg-302. His-41 (proton donor) is an active-site residue. Residue 298-304 (TVTGRKR) participates in substrate binding. GTP contacts are provided by residues Arg-304, 330–332 (KLD), and 412–414 (STS).

The protein belongs to the adenylosuccinate synthetase family. In terms of assembly, homodimer. It depends on Mg(2+) as a cofactor.

Its subcellular location is the cytoplasm. The catalysed reaction is IMP + L-aspartate + GTP = N(6)-(1,2-dicarboxyethyl)-AMP + GDP + phosphate + 2 H(+). It functions in the pathway purine metabolism; AMP biosynthesis via de novo pathway; AMP from IMP: step 1/2. In terms of biological role, plays an important role in the de novo pathway of purine nucleotide biosynthesis. Catalyzes the first committed step in the biosynthesis of AMP from IMP. The chain is Adenylosuccinate synthetase from Novosphingobium aromaticivorans (strain ATCC 700278 / DSM 12444 / CCUG 56034 / CIP 105152 / NBRC 16084 / F199).